A 110-amino-acid polypeptide reads, in one-letter code: Ferredoxin (110 aa).

4Fe-4S ferredoxin-type domains are found at residues 2 to 30 and 31 to 60; these read TYIV…YEGE and FMLV…PESP. [3Fe-4S] cluster is bound by residues C9 and C17. [4Fe-4S] cluster is bound by residues C21, C40, C43, and C46. Residue C50 coordinates [3Fe-4S] cluster.

[4Fe-4S] cluster is required as a cofactor. [3Fe-4S] cluster serves as cofactor.

Ferredoxins are iron-sulfur proteins that transfer electrons in a wide variety of metabolic reactions. The chain is Ferredoxin (fdxA) from Rickettsia typhi (strain ATCC VR-144 / Wilmington).